A 308-amino-acid chain; its full sequence is Cell division protein ZipA (308 aa).

The Periplasmic segment spans residues 1–5; that stretch reads MQELR. The helical transmembrane segment at 6–26 threads the bilayer; sequence LVLILVGALAIAALLFHGLWT. Residues 27-308 lie on the Cytoplasmic side of the membrane; it reads SRKETSSKFG…YKQRVKVFCN (282 aa). The tract at residues 43 to 90 is disordered; the sequence is FDSESEDEQPTPARGFEQPKESVVDVRQERKEPAFGRDEPNLSQDPLF. Residues 59–82 are compositionally biased toward basic and acidic residues; it reads EQPKESVVDVRQERKEPAFGRDEP.

It belongs to the ZipA family. As to quaternary structure, interacts with FtsZ via their C-terminal domains.

It localises to the cell inner membrane. In terms of biological role, essential cell division protein that stabilizes the FtsZ protofilaments by cross-linking them and that serves as a cytoplasmic membrane anchor for the Z ring. Also required for the recruitment to the septal ring of downstream cell division proteins. The protein is Cell division protein ZipA of Aliivibrio salmonicida (strain LFI1238) (Vibrio salmonicida (strain LFI1238)).